Reading from the N-terminus, the 61-residue chain is Large ribosomal subunit protein eL37 (61 aa).

Positions 19, 22, 34, and 37 each coordinate Zn(2+). Residues 19 to 37 (CRRCGRNSFNVRKGYCAAC) form a C4-type zinc finger.

Belongs to the eukaryotic ribosomal protein eL37 family. Zn(2+) serves as cofactor.

Its function is as follows. Binds to the 23S rRNA. The sequence is that of Large ribosomal subunit protein eL37 (rpl37e) from Sulfurisphaera tokodaii (strain DSM 16993 / JCM 10545 / NBRC 100140 / 7) (Sulfolobus tokodaii).